A 197-amino-acid chain; its full sequence is UPF0301 protein AnaeK_4073 (197 aa).

The protein belongs to the UPF0301 (AlgH) family.

The polypeptide is UPF0301 protein AnaeK_4073 (Anaeromyxobacter sp. (strain K)).